The sequence spans 566 residues: Membrane protein insertase YidC (566 aa).

A helical transmembrane segment spans residues Asn-6–Glu-26. Residues Gln-30–Ser-80 form a disordered region. Residues Val-31 to Asp-41 show a composition bias toward polar residues. The segment covering Ser-42–Ser-58 has biased composition (low complexity). Over residues Val-61 to Ser-80 the composition is skewed to polar residues. The next 4 membrane-spanning stretches (helical) occupy residues Leu-356–Phe-376, Leu-433–Leu-453, Leu-471–Ile-491, and Phe-510–Trp-530.

Belongs to the OXA1/ALB3/YidC family. Type 1 subfamily. In terms of assembly, interacts with the Sec translocase complex via SecD. Specifically interacts with transmembrane segments of nascent integral membrane proteins during membrane integration.

The protein localises to the cell inner membrane. Its function is as follows. Required for the insertion and/or proper folding and/or complex formation of integral membrane proteins into the membrane. Involved in integration of membrane proteins that insert both dependently and independently of the Sec translocase complex, as well as at least some lipoproteins. Aids folding of multispanning membrane proteins. This chain is Membrane protein insertase YidC, found in Psychromonas ingrahamii (strain DSM 17664 / CCUG 51855 / 37).